We begin with the raw amino-acid sequence, 119 residues long: Holo-[acyl-carrier-protein] synthase (119 aa).

Residues Asp8 and Glu50 each coordinate Mg(2+).

It belongs to the P-Pant transferase superfamily. AcpS family. The cofactor is Mg(2+).

The protein resides in the cytoplasm. It catalyses the reaction apo-[ACP] + CoA = holo-[ACP] + adenosine 3',5'-bisphosphate + H(+). Functionally, transfers the 4'-phosphopantetheine moiety from coenzyme A to a Ser of acyl-carrier-protein. The polypeptide is Holo-[acyl-carrier-protein] synthase (Clavibacter michiganensis subsp. michiganensis (strain NCPPB 382)).